The following is a 681-amino-acid chain: Cell cycle checkpoint protein RAD17 (681 aa).

Positions 17–25 match the RAD1-binding motif motif; it reads DWVDPSFDD. The tract at residues 42–63 is disordered; the sequence is VNNSSHRRKNGPSTLESSRFPA. Position 55 is a phosphothreonine (Thr-55). Phosphoserine is present on residues Ser-71 and Ser-86. 137–144 contributes to the ATP binding site; the sequence is GPPGCGKT. A Phosphoserine modification is found at Ser-359. The interval 432–681 is interaction with MCM7; sequence LVEPEEVVEM…IIEDYESDGT (250 aa). Residues 606 to 681 form a disordered region; the sequence is HGMIDPDSGD…IIEDYESDGT (76 aa). The span at 631–662 shows a compositional bias: polar residues; it reads EPTQATALETWSLPLSQNSASELPASQPQPFS. A Phosphothreonine modification is found at Thr-633. Ser-646 and Ser-656 each carry phosphoserine. Residues 666-681 show a composition bias toward acidic residues; the sequence is DMEENIIIEDYESDGT.

Belongs to the rad17/RAD24 family. As to quaternary structure, part of a DNA-binding complex containing RFC2, RFC3, RFC4 and RFC5. Interacts with RAD1 and RAD9 within the 9-1-1 (RAD1-RAD9-HUS1) complex. Interacts with RAD9B, POLE, SNU13 and MCM7. DNA damage promotes interaction with ATR or ATM and disrupts interaction with the 9-1-1 (RAD1-RAD9-HUS1) complex. Interacts (when phosphorylated) with NBN; promoting recruitment of the MRN complex to DNA damage sites. In terms of processing, phosphorylated. Phosphorylation on Ser-646 and Ser-656 is cell cycle-regulated, enhanced by genotoxic stress, and required for activation of checkpoint signaling. Phosphorylation is mediated by ATR upon UV or replication arrest, whereas it may be mediated both by ATR and ATM upon ionizing radiation. Phosphorylation on both sites is required for interaction with RAD1 but dispensable for interaction with RFC3 or RFC4. Phosphorylation at Thr-633 by ATM in response to DNA damage promotes interaction with NBN and recruitment of the MRN complex to DNA damage sites.

It is found in the nucleus. Its subcellular location is the chromosome. Essential for sustained cell growth, maintenance of chromosomal stability, and ATR-dependent checkpoint activation upon DNA damage. Has a weak ATPase activity required for binding to chromatin. Participates in the recruitment of the 9-1-1 (RAD1-RAD9-HUS1) complex and RHNO1 onto chromatin, and in CHEK1 activation. Involved in homologous recombination by mediating recruitment of the MRN complex to DNA damage sites. May also serve as a sensor of DNA replication progression. The polypeptide is Cell cycle checkpoint protein RAD17 (RAD17) (Pongo abelii (Sumatran orangutan)).